Here is a 151-residue protein sequence, read N- to C-terminus: Small ribosomal subunit protein uS15 (151 aa).

Residues 1–16 show a composition bias toward basic residues; it reads MPHRSRHKKGRSRSVR. Residues 1–21 are disordered; it reads MPHRSRHKKGRSRSVRPAHPT.

The protein belongs to the universal ribosomal protein uS15 family. In terms of assembly, part of the 30S ribosomal subunit.

In Pyrobaculum islandicum (strain DSM 4184 / JCM 9189 / GEO3), this protein is Small ribosomal subunit protein uS15.